We begin with the raw amino-acid sequence, 228 residues long: MGRLKKLKKIRIHREGTHILWGSFFLLLIINLALYWGIDCKIPFYLVALVSIVVYLLMVNFFRCPIRLFGQDTEKIVVAPADGKIVVIEEVDEHEYFHDRRIMVSIFMSILNVHANWYPVDGVVKKVTHDNGKFMKAWLPKASTENERSMIVIETPEGVEVMARQIAGAMARRIVTYAEPGEECYIDEHLGFIKFGSRVDVYLPLGTEICVSMGQLTTGNQTVIAKLK.

Ser-197 acts as the Schiff-base intermediate with substrate; via pyruvic acid in catalysis. Ser-197 carries the post-translational modification Pyruvic acid (Ser); by autocatalysis.

Belongs to the phosphatidylserine decarboxylase family. PSD-A subfamily. As to quaternary structure, heterodimer of a large membrane-associated beta subunit and a small pyruvoyl-containing alpha subunit. Pyruvate is required as a cofactor. Post-translationally, is synthesized initially as an inactive proenzyme. Formation of the active enzyme involves a self-maturation process in which the active site pyruvoyl group is generated from an internal serine residue via an autocatalytic post-translational modification. Two non-identical subunits are generated from the proenzyme in this reaction, and the pyruvate is formed at the N-terminus of the alpha chain, which is derived from the carboxyl end of the proenzyme. The post-translation cleavage follows an unusual pathway, termed non-hydrolytic serinolysis, in which the side chain hydroxyl group of the serine supplies its oxygen atom to form the C-terminus of the beta chain, while the remainder of the serine residue undergoes an oxidative deamination to produce ammonia and the pyruvoyl prosthetic group on the alpha chain.

Its subcellular location is the cell membrane. The catalysed reaction is a 1,2-diacyl-sn-glycero-3-phospho-L-serine + H(+) = a 1,2-diacyl-sn-glycero-3-phosphoethanolamine + CO2. It functions in the pathway phospholipid metabolism; phosphatidylethanolamine biosynthesis; phosphatidylethanolamine from CDP-diacylglycerol: step 2/2. Functionally, catalyzes the formation of phosphatidylethanolamine (PtdEtn) from phosphatidylserine (PtdSer). The polypeptide is Phosphatidylserine decarboxylase proenzyme (Bacteroides fragilis (strain ATCC 25285 / DSM 2151 / CCUG 4856 / JCM 11019 / LMG 10263 / NCTC 9343 / Onslow / VPI 2553 / EN-2)).